Reading from the N-terminus, the 294-residue chain is 2-oxo-3-(phosphooxy)propyl 3-oxoalkanoate synthase (294 aa).

It belongs to the AfsA family.

It catalyses the reaction a medium-chain 3-oxoacyl-[ACP] + dihydroxyacetone phosphate = a (4-alkanoyl-5-oxo-2,5-dihydrofuran-3-yl)methyl phosphate + holo-[ACP] + H2O. Functionally, involved in the biosynthesis of virginiae butanolide (VB), a gamma-butyrolactone autoregulator that triggers the production of the streptogramin antibiotic virginiamycin. The chain is 2-oxo-3-(phosphooxy)propyl 3-oxoalkanoate synthase from Streptomyces virginiae (Streptomyces cinnamonensis).